We begin with the raw amino-acid sequence, 698 residues long: Elongation factor G (698 aa).

The tr-type G domain maps to 8-290; that stretch reads ERYRNIGISA…AVIELLPSPT (283 aa). GTP is bound by residues 17 to 24, 88 to 92, and 142 to 145; these read AHIDAGKT, DTPGH, and NKMD.

It belongs to the TRAFAC class translation factor GTPase superfamily. Classic translation factor GTPase family. EF-G/EF-2 subfamily.

It is found in the cytoplasm. In terms of biological role, catalyzes the GTP-dependent ribosomal translocation step during translation elongation. During this step, the ribosome changes from the pre-translocational (PRE) to the post-translocational (POST) state as the newly formed A-site-bound peptidyl-tRNA and P-site-bound deacylated tRNA move to the P and E sites, respectively. Catalyzes the coordinated movement of the two tRNA molecules, the mRNA and conformational changes in the ribosome. The chain is Elongation factor G from Chromobacterium violaceum (strain ATCC 12472 / DSM 30191 / JCM 1249 / CCUG 213 / NBRC 12614 / NCIMB 9131 / NCTC 9757 / MK).